A 710-amino-acid polypeptide reads, in one-letter code: PWWP domain-containing DNA repair factor 3A (710 aa).

The segment at 106–160 (QESSAGTGRADRSLRGKPMEHVSSPCDSNSSSLPRGDVLGSSRPHRRRPCVQQSL) is disordered. A compositionally biased stretch (basic and acidic residues) spans 114-125 (RADRSLRGKPME). Over residues 128-137 (SSPCDSNSSS) the composition is skewed to low complexity. Residue Ser161 is modified to Phosphoserine. Disordered stretches follow at residues 177–204 (KKGLRKSENPRGPLVLPAGGGAQDESGS) and 230–398 (NGSS…EEPP). Residues 288–297 (PSACSEPGEC) are compositionally biased toward low complexity. Ser374 and Ser375 each carry phosphoserine. Polar residues predominate over residues 375-385 (SEESMGSNSMR). In terms of domain architecture, PWWP spans 411–472 (VGMLVWHKHK…KHFDCKEKQT (62 aa)).

The protein belongs to the PWWP3A family. In terms of assembly, interacts with TP53BP1 (via BRCT domain); the interaction is not dependent on its phosphorylation status. Binds nucleosomes. Interacts with trimethylated 'Lys-36' of histone H3 (H3K36me3) (in vitro).

The protein resides in the nucleus. In terms of biological role, involved in the DNA damage response pathway by contributing to the maintenance of chromatin architecture. Recruited to the vicinity of DNA breaks by TP53BP1 and plays an accessory role to facilitate damage-induced chromatin changes and promoting chromatin relaxation. Required for efficient DNA repair and cell survival following DNA damage. This is PWWP domain-containing DNA repair factor 3A from Homo sapiens (Human).